The sequence spans 502 residues: Glutamate--tRNA ligase (502 aa).

Residues 21–31 (PSPTGVPHVGM) carry the 'HIGH' region motif. The short motif at 265–269 (KLSKR) is the 'KMSKS' region element. Lysine 268 provides a ligand contact to ATP.

The protein belongs to the class-I aminoacyl-tRNA synthetase family. Glutamate--tRNA ligase type 1 subfamily. In terms of assembly, monomer.

It localises to the cytoplasm. The enzyme catalyses tRNA(Glu) + L-glutamate + ATP = L-glutamyl-tRNA(Glu) + AMP + diphosphate. Functionally, catalyzes the attachment of glutamate to tRNA(Glu) in a two-step reaction: glutamate is first activated by ATP to form Glu-AMP and then transferred to the acceptor end of tRNA(Glu). The chain is Glutamate--tRNA ligase from Mycobacterium leprae (strain TN).